The primary structure comprises 620 residues: Transcription factor kayak (620 aa).

Disordered stretches follow at residues 1-36 and 184-288; these read MKVK…SNGV and SDTD…EKRR. Positions 184 to 194 are enriched in polar residues; that stretch reads SDTDDSNASWN. Composition is skewed to low complexity over residues 201-233 and 249-266; these read GDTT…GANN and ANNN…PAAR. The bZIP domain maps to 284–347; it reads EEKRRIRRER…NQLKYVIEAH (64 aa). The tract at residues 286 to 305 is basic motif; sequence KRRIRRERNKAAAARCRKRR. The leucine-zipper stretch occupies residues 312-340; the sequence is LTEEVDALVKKGDTLKAEITTLTELRNQL. Residues 375-414 are disordered; the sequence is STGGSSCGSVHSNHSHNNNNNNNNSNDSSSGTITGFDATL. Residues 377 to 405 show a composition bias toward low complexity; sequence GGSSCGSVHSNHSHNNNNNNNNSNDSSSG. Ser-422 is subject to Phosphoserine. 2 disordered regions span residues 447 to 466 and 590 to 620; these read GLDS…AKRA and SGPL…LCPL.

The protein belongs to the bZIP family. Fos subfamily. Homodimer. Heterodimer with Jra. The kay-Jra heterodimer binds more stably to the AP-1 site than either of the two proteins alone.

It localises to the nucleus. Functionally, developmentally regulated transcription factor AP-1 binds and recognizes the enhancer DNA sequence: 5'-TGA[CG]TCA-3'. May play a role in the function or determination of a particular subset of cells in the developing embryo. It is able to carry out its function either independently of or in conjunction with Jra. The sequence is that of Transcription factor kayak from Drosophila willistoni (Fruit fly).